The chain runs to 664 residues: DNA ligase (664 aa).

Residues 32-36 (DKEYD) and 80-81 (SL) each bind NAD(+). Lysine 122 acts as the N6-AMP-lysine intermediate in catalysis. NAD(+) is bound by residues arginine 144, glutamate 178, and lysine 314. Positions 407, 410, 423, and 429 each coordinate Zn(2+). Residues 587–664 (IDENPFMGKT…NEEEFSNKIK (78 aa)) enclose the BRCT domain.

The protein belongs to the NAD-dependent DNA ligase family. LigA subfamily. Mg(2+) is required as a cofactor. It depends on Mn(2+) as a cofactor.

It catalyses the reaction NAD(+) + (deoxyribonucleotide)n-3'-hydroxyl + 5'-phospho-(deoxyribonucleotide)m = (deoxyribonucleotide)n+m + AMP + beta-nicotinamide D-nucleotide.. DNA ligase that catalyzes the formation of phosphodiester linkages between 5'-phosphoryl and 3'-hydroxyl groups in double-stranded DNA using NAD as a coenzyme and as the energy source for the reaction. It is essential for DNA replication and repair of damaged DNA. This is DNA ligase from Clostridium botulinum (strain 657 / Type Ba4).